Reading from the N-terminus, the 231-residue chain is 2-C-methyl-D-erythritol 4-phosphate cytidylyltransferase (231 aa).

It belongs to the IspD/TarI cytidylyltransferase family. IspD subfamily.

It catalyses the reaction 2-C-methyl-D-erythritol 4-phosphate + CTP + H(+) = 4-CDP-2-C-methyl-D-erythritol + diphosphate. It functions in the pathway isoprenoid biosynthesis; isopentenyl diphosphate biosynthesis via DXP pathway; isopentenyl diphosphate from 1-deoxy-D-xylulose 5-phosphate: step 2/6. Its function is as follows. Catalyzes the formation of 4-diphosphocytidyl-2-C-methyl-D-erythritol from CTP and 2-C-methyl-D-erythritol 4-phosphate (MEP). The protein is 2-C-methyl-D-erythritol 4-phosphate cytidylyltransferase of Clostridium kluyveri (strain NBRC 12016).